Reading from the N-terminus, the 401-residue chain is Argininosuccinate synthase (401 aa).

8–16 (AYSGGLDTS) is an ATP binding site. Position 87 (Y87) interacts with L-citrulline. G117 contributes to the ATP binding site. T119, N123, and D124 together coordinate L-aspartate. N123 contacts L-citrulline. The L-citrulline site is built by R127, S175, E259, and Y271.

The protein belongs to the argininosuccinate synthase family. Type 1 subfamily. As to quaternary structure, homotetramer.

The protein localises to the cytoplasm. It catalyses the reaction L-citrulline + L-aspartate + ATP = 2-(N(omega)-L-arginino)succinate + AMP + diphosphate + H(+). It participates in amino-acid biosynthesis; L-arginine biosynthesis; L-arginine from L-ornithine and carbamoyl phosphate: step 2/3. In Pseudarthrobacter chlorophenolicus (strain ATCC 700700 / DSM 12829 / CIP 107037 / JCM 12360 / KCTC 9906 / NCIMB 13794 / A6) (Arthrobacter chlorophenolicus), this protein is Argininosuccinate synthase.